The sequence spans 157 residues: Peptide methionine sulfoxide reductase MsrA (157 aa).

Residue Cys-10 is part of the active site.

It belongs to the MsrA Met sulfoxide reductase family.

The enzyme catalyses L-methionyl-[protein] + [thioredoxin]-disulfide + H2O = L-methionyl-(S)-S-oxide-[protein] + [thioredoxin]-dithiol. It carries out the reaction [thioredoxin]-disulfide + L-methionine + H2O = L-methionine (S)-S-oxide + [thioredoxin]-dithiol. Has an important function as a repair enzyme for proteins that have been inactivated by oxidation. Catalyzes the reversible oxidation-reduction of methionine sulfoxide in proteins to methionine. The protein is Peptide methionine sulfoxide reductase MsrA of Clostridium botulinum (strain Loch Maree / Type A3).